The sequence spans 531 residues: O-phosphoserine--tRNA(Cys) ligase (531 aa).

Residues 189–191 (HMT), 234–236 (SAS), 276–277 (YY), and asparagine 319 contribute to the substrate site.

This sequence belongs to the class-II aminoacyl-tRNA synthetase family. O-phosphoseryl-tRNA(Cys) synthetase subfamily. As to quaternary structure, homotetramer. Interacts with SepCysS.

It carries out the reaction tRNA(Cys) + O-phospho-L-serine + ATP = O-phospho-L-seryl-tRNA(Cys) + AMP + diphosphate. Catalyzes the attachment of O-phosphoserine (Sep) to tRNA(Cys). This chain is O-phosphoserine--tRNA(Cys) ligase, found in Methanospirillum hungatei JF-1 (strain ATCC 27890 / DSM 864 / NBRC 100397 / JF-1).